We begin with the raw amino-acid sequence, 248 residues long: Probable transcriptional regulatory protein LAR_0538 (248 aa).

The tract at residues M1–G22 is disordered.

The protein belongs to the TACO1 family.

The protein localises to the cytoplasm. The protein is Probable transcriptional regulatory protein LAR_0538 of Limosilactobacillus reuteri subsp. reuteri (strain JCM 1112) (Lactobacillus reuteri).